The following is a 237-amino-acid chain: Ribonuclease 3 (237 aa).

Residues 4 to 133 (LTELENSLGV…VLAAIYIDKG (130 aa)) enclose the RNase III domain. Position 46 (Glu46) interacts with Mg(2+). Active-site residues include Asp50 and Glu122. Position 122 (Glu122) interacts with Mg(2+). The DRBM domain maps to 160 to 229 (DYKSRLQELI…AKVALQQFEN (70 aa)).

The protein belongs to the ribonuclease III family. As to quaternary structure, homodimer. Mg(2+) serves as cofactor.

Its subcellular location is the cytoplasm. The enzyme catalyses Endonucleolytic cleavage to 5'-phosphomonoester.. Its function is as follows. Digests double-stranded RNA. Involved in the processing of primary rRNA transcript to yield the immediate precursors to the large and small rRNAs (23S and 16S). Processes some mRNAs, and tRNAs when they are encoded in the rRNA operon. Processes pre-crRNA and tracrRNA of type II CRISPR loci if present in the organism. The sequence is that of Ribonuclease 3 from Dehalococcoides mccartyi (strain CBDB1).